Consider the following 1060-residue polypeptide: Carbamoyl phosphate synthase large chain (1060 aa).

Residues 1 to 400 form a carboxyphosphate synthetic domain region; sequence MPRDESINKV…SLNKAIRSLD (400 aa). ATP contacts are provided by Arg-127, Arg-167, Gly-173, Gly-174, Gln-206, Val-208, Glu-213, Gly-240, Ile-241, His-242, Gln-283, and Glu-297. The 196-residue stretch at 131–326 folds into the ATP-grasp 1 domain; it reads DSFMKKLNEP…IAKIAAKIAV (196 aa). The Mg(2+) site is built by Gln-283, Glu-297, and Asn-299. Mn(2+) contacts are provided by Gln-283, Glu-297, and Asn-299. An oligomerization domain region spans residues 401–539; that stretch reads IGADGFTETP…YGCYDLEDEV (139 aa). The tract at residues 540 to 926 is carbamoyl phosphate synthetic domain; it reads EVSDRRKVLI…YKSQLSASMD (387 aa). Residues 664–858 enclose the ATP-grasp 2 domain; sequence TEVLNKLGIP…LAKMAARLMM (195 aa). Arg-700, Lys-739, Leu-741, Glu-746, Gly-771, Val-772, His-773, Ser-774, Gln-814, and Glu-829 together coordinate ATP. Mg(2+) is bound by residues Gln-814, Glu-829, and Asn-831. The Mn(2+) site is built by Gln-814, Glu-829, and Asn-831. The 136-residue stretch at 925–1060 folds into the MGS-like domain; it reads MDLLNEGKVF…VKSLDEYHGM (136 aa). Positions 927-1060 are allosteric domain; sequence LLNEGKVFIS…VKSLDEYHGM (134 aa).

It belongs to the CarB family. In terms of assembly, composed of two chains; the small (or glutamine) chain promotes the hydrolysis of glutamine to ammonia, which is used by the large (or ammonia) chain to synthesize carbamoyl phosphate. Tetramer of heterodimers (alpha,beta)4. The cofactor is Mg(2+). It depends on Mn(2+) as a cofactor.

The enzyme catalyses hydrogencarbonate + L-glutamine + 2 ATP + H2O = carbamoyl phosphate + L-glutamate + 2 ADP + phosphate + 2 H(+). It catalyses the reaction hydrogencarbonate + NH4(+) + 2 ATP = carbamoyl phosphate + 2 ADP + phosphate + 2 H(+). Its pathway is amino-acid biosynthesis; L-arginine biosynthesis; carbamoyl phosphate from bicarbonate: step 1/1. It participates in pyrimidine metabolism; UMP biosynthesis via de novo pathway; (S)-dihydroorotate from bicarbonate: step 1/3. Functionally, large subunit of the glutamine-dependent carbamoyl phosphate synthetase (CPSase). CPSase catalyzes the formation of carbamoyl phosphate from the ammonia moiety of glutamine, carbonate, and phosphate donated by ATP, constituting the first step of 2 biosynthetic pathways, one leading to arginine and/or urea and the other to pyrimidine nucleotides. The large subunit (synthetase) binds the substrates ammonia (free or transferred from glutamine from the small subunit), hydrogencarbonate and ATP and carries out an ATP-coupled ligase reaction, activating hydrogencarbonate by forming carboxy phosphate which reacts with ammonia to form carbamoyl phosphate. The protein is Carbamoyl phosphate synthase large chain of Methanothermobacter thermautotrophicus (strain ATCC 29096 / DSM 1053 / JCM 10044 / NBRC 100330 / Delta H) (Methanobacterium thermoautotrophicum).